A 253-amino-acid polypeptide reads, in one-letter code: Phosphate import ATP-binding protein PstB 3 (253 aa).

Positions 8–248 (LVINNLDLYY…PQDERTENYI (241 aa)) constitute an ABC transporter domain. ATP is bound at residue 40-47 (GPSGCGKS).

It belongs to the ABC transporter superfamily. Phosphate importer (TC 3.A.1.7) family. In terms of assembly, the complex is composed of two ATP-binding proteins (PstB), two transmembrane proteins (PstC and PstA) and a solute-binding protein (PstS).

The protein localises to the cell membrane. It catalyses the reaction phosphate(out) + ATP + H2O = ADP + 2 phosphate(in) + H(+). Its function is as follows. Part of the ABC transporter complex PstSACB involved in phosphate import. Responsible for energy coupling to the transport system. The protein is Phosphate import ATP-binding protein PstB 3 of Streptococcus agalactiae serotype III (strain NEM316).